The primary structure comprises 614 residues: Threonine--tRNA ligase (614 aa).

The interval 1–138 is editing domain; sequence MRTLMIHSDY…HPLSELSRTI (138 aa). The disordered stretch occupies residues 133 to 157; sequence ELSRTITTEPEEESEDSEEEPSEPS. A compositionally biased stretch (acidic residues) spans 141-154; that stretch reads EPEEESEDSEEEPS. The catalytic stretch occupies residues 200-495; sequence PHVRLMREKE…TDKGNKPSLP (296 aa). Zn(2+) is bound by residues cysteine 292, histidine 344, and histidine 466.

The protein belongs to the class-II aminoacyl-tRNA synthetase family. As to quaternary structure, homodimer. Zn(2+) is required as a cofactor.

The protein resides in the cytoplasm. It catalyses the reaction tRNA(Thr) + L-threonine + ATP = L-threonyl-tRNA(Thr) + AMP + diphosphate + H(+). Catalyzes the attachment of threonine to tRNA(Thr) in a two-step reaction: L-threonine is first activated by ATP to form Thr-AMP and then transferred to the acceptor end of tRNA(Thr). Also edits incorrectly charged L-seryl-tRNA(Thr). The chain is Threonine--tRNA ligase from Methanosphaera stadtmanae (strain ATCC 43021 / DSM 3091 / JCM 11832 / MCB-3).